The sequence spans 186 residues: MSAAEIKTNTDQKMQKSLESLKSSLAKIRSGRANPGILEHIHVDYYGNPTPLSQVASLGLADARTINVQPFEKTMVAAVEKAIRDSDLGLNPASQGTVIRVPMPALTEERRRELTKVVKSEGEDTKIAVRNLRRDANEHLKRLTKDKEISEDEERRATDEIQKMTDKAVVDIDKIIVEKEKEIMTV.

The protein belongs to the RRF family.

It is found in the cytoplasm. In terms of biological role, responsible for the release of ribosomes from messenger RNA at the termination of protein biosynthesis. May increase the efficiency of translation by recycling ribosomes from one round of translation to another. The chain is Ribosome-recycling factor from Polynucleobacter asymbioticus (strain DSM 18221 / CIP 109841 / QLW-P1DMWA-1) (Polynucleobacter necessarius subsp. asymbioticus).